Reading from the N-terminus, the 375-residue chain is Fluoride export protein 2 (375 aa).

Topologically, residues 1 to 11 (MIFNPVISNHK) are cytoplasmic. A helical transmembrane segment spans residues 12–32 (LSHYIHVFCTFTTFCILGTET). Topologically, residues 33-34 (RQ) are extracellular. The chain crosses the membrane as a helical span at residues 35 to 55 (AITALSTYTPAFVTAPTVLWS). Residues 56–79 (NCSSCMLMGIMQSLNAYTWMKDHQ) lie on the Cytoplasmic side of the membrane. The helical transmembrane segment at 80 to 100 (VLFLGVTTGYCGALSSFSSML) threads the bilayer. Over 101–127 (LEMFEHSTNLTNGNIANHTKLPNRAYG) the chain is Extracellular. Residues N109 and N117 are each glycosylated (N-linked (GlcNAc...) asparagine). A helical transmembrane segment spans residues 128 to 148 (IMEFLSVLLVHLMVSMGSLIF). Topologically, residues 149–213 (GRQLGKEVIV…FKKFFDVVDK (65 aa)) are cytoplasmic. Residues 214 to 234 (LAYALAFPLIILFVVLCAYYE) traverse the membrane as a helical segment. The N-linked (GlcNAc...) asparagine glycan is linked to N235. The Extracellular segment spans residues 235–241 (NYSRGKW). The chain crosses the membrane as a helical span at residues 242–262 (TLPCLFGIFAGFLRYWLAEMF). Over 263 to 268 (NKTNKK) the chain is Cytoplasmic. Residues 269–289 (FPLGTFLANVFATLLIGIFTM) traverse the membrane as a helical segment. Over 290 to 310 (VQRGKKHFSTDIPIVNSLNSC) the chain is Extracellular. Residues 311 to 331 (HIVSALISGFCGTLSTISTFI) form a helical membrane-spanning segment. At 332–338 (NEGYKLS) the chain is on the cytoplasmic side. A helical membrane pass occupies residues 339–359 (FINMLIYYTVSIGISYCLLVI). The Extracellular segment spans residues 360 to 375 (TLGSYAWTRGLTNPIC).

It belongs to the fluoride channel Fluc/FEX (TC 1.A.43) family.

The protein localises to the cell membrane. The catalysed reaction is fluoride(in) = fluoride(out). Its function is as follows. Fluoride channel required for the rapid expulsion of cytoplasmic fluoride. The polypeptide is Fluoride export protein 2 (Saccharomyces cerevisiae (strain ATCC 204508 / S288c) (Baker's yeast)).